The chain runs to 334 residues: Galactosylgalactosylxylosylprotein 3-beta-glucuronosyltransferase 1 (334 aa).

Topologically, residues 1-6 (MPKRRD) are cytoplasmic. The segment at 3–5 (KRR) is essential for transport from endoplasmic reticulum to Golgi apparatus and interaction with SAR1A. The helical; Signal-anchor for type II membrane protein transmembrane segment at 7–27 (ILAIVLIVLPWTLLITVWHQS) threads the bilayer. Topologically, residues 28 to 334 (SLAPLLAVHK…KGFTDPSVEI (307 aa)) are lumenal. 91–93 (PTY) serves as a coordination point for UDP-alpha-D-glucuronate. Phosphothreonine is present on residues Thr-103 and Thr-108. Asp-122 contributes to the UDP-alpha-D-glucuronate binding site. Asn-140 carries N-linked (GlcNAc...) asparagine glycosylation. Residues Arg-165 and Arg-170 each coordinate UDP-alpha-D-glucuronate. An N-linked (GlcNAc...) asparagine glycan is attached at Asn-184. Residue 195–197 (DDD) participates in UDP-alpha-D-glucuronate binding. Residue Asp-197 participates in Mn(2+) binding. The interval 245-254 (FDPHRPFAID) is interaction with galactose moiety of substrate glycoprotein. Glu-284 functions as the Proton donor/acceptor in the catalytic mechanism. The N-linked (GlcNAc...) asparagine glycan is linked to Asn-303. 311–313 (HTR) contributes to the UDP-alpha-D-glucuronate binding site.

It belongs to the glycosyltransferase 43 family. In terms of assembly, homodimer. Interacts with SAR1A. Mn(2+) serves as cofactor. Post-translationally, the soluble form derives from the membrane form by proteolytic processing.

It is found in the golgi apparatus membrane. The protein localises to the secreted. The protein resides in the endoplasmic reticulum membrane. The enzyme catalyses 3-O-(beta-D-galactosyl-(1-&gt;3)-beta-D-galactosyl-(1-&gt;4)-beta-D-xylosyl)-L-seryl-[protein] + UDP-alpha-D-glucuronate = 3-O-(beta-D-GlcA-(1-&gt;3)-beta-D-Gal-(1-&gt;3)-beta-D-Gal-(1-&gt;4)-beta-D-Xyl)-L-seryl-[protein] + UDP + H(+). The protein operates within protein modification; protein glycosylation. Its function is as follows. Involved in the biosynthesis of L2/HNK-1 carbohydrate epitope on glycoproteins. Can also play a role in glycosaminoglycan biosynthesis. Substrates include asialo-orosomucoid (ASOR), asialo-fetuin, and asialo-neural cell adhesion molecule. Requires sphingomyelin for activity: stearoyl-sphingomyelin was the most effective, followed by palmitoyl-sphingomyelin and lignoceroyl-sphingomyelin. Activity was demonstrated only for sphingomyelin with a saturated fatty acid and not for that with an unsaturated fatty acid, regardless of the length of the acyl group. The protein is Galactosylgalactosylxylosylprotein 3-beta-glucuronosyltransferase 1 of Mus musculus (Mouse).